We begin with the raw amino-acid sequence, 292 residues long: Ribonuclease Z (292 aa).

Zn(2+)-binding residues include H60, H62, D64, H65, H132, D200, and H256. Catalysis depends on D64, which acts as the Proton acceptor.

Belongs to the RNase Z family. In terms of assembly, homodimer. It depends on Zn(2+) as a cofactor.

The enzyme catalyses Endonucleolytic cleavage of RNA, removing extra 3' nucleotides from tRNA precursor, generating 3' termini of tRNAs. A 3'-hydroxy group is left at the tRNA terminus and a 5'-phosphoryl group is left at the trailer molecule.. In terms of biological role, zinc phosphodiesterase, which displays some tRNA 3'-processing endonuclease activity. Probably involved in tRNA maturation, by removing a 3'-trailer from precursor tRNA. This is Ribonuclease Z from Sulfolobus acidocaldarius (strain ATCC 33909 / DSM 639 / JCM 8929 / NBRC 15157 / NCIMB 11770).